The primary structure comprises 386 residues: GTPase Obg (386 aa).

The Obg domain occupies 1–159 (MKFVDEAVIR…RSLKLELMLL (159 aa)). Residues 160–333 (ADVGLLGMPN…LSLKLVDFID (174 aa)) enclose the OBG-type G domain. Residues 166–173 (GMPNAGKS), 191–195 (FTTLV), 213–216 (DIPG), 283–286 (NKKD), and 314–316 (SAY) contribute to the GTP site. Positions 173 and 193 each coordinate Mg(2+). The tract at residues 356-375 (KDSDSLNEDFDDSDDDDFDD) is disordered. A compositionally biased stretch (acidic residues) spans 360-375 (SLNEDFDDSDDDDFDD).

It belongs to the TRAFAC class OBG-HflX-like GTPase superfamily. OBG GTPase family. As to quaternary structure, monomer. It depends on Mg(2+) as a cofactor.

The protein resides in the cytoplasm. In terms of biological role, an essential GTPase which binds GTP, GDP and possibly (p)ppGpp with moderate affinity, with high nucleotide exchange rates and a fairly low GTP hydrolysis rate. Plays a role in control of the cell cycle, stress response, ribosome biogenesis and in those bacteria that undergo differentiation, in morphogenesis control. This Shewanella sediminis (strain HAW-EB3) protein is GTPase Obg.